The following is a 176-amino-acid chain: Inner membrane-spanning protein YciB (176 aa).

Transmembrane regions (helical) follow at residues 24–44 (TATA…AFRH), 49–69 (PMLW…LVLH), 76–96 (WKPT…QLAF), 119–139 (LSVV…FVAY), and 149–169 (FKLF…SLWL).

This sequence belongs to the YciB family.

Its subcellular location is the cell inner membrane. Functionally, plays a role in cell envelope biogenesis, maintenance of cell envelope integrity and membrane homeostasis. The chain is Inner membrane-spanning protein YciB from Paraburkholderia phytofirmans (strain DSM 17436 / LMG 22146 / PsJN) (Burkholderia phytofirmans).